Reading from the N-terminus, the 301-residue chain is Glycine--tRNA ligase alpha subunit (301 aa).

The protein belongs to the class-II aminoacyl-tRNA synthetase family. In terms of assembly, tetramer of two alpha and two beta subunits.

The protein localises to the cytoplasm. The enzyme catalyses tRNA(Gly) + glycine + ATP = glycyl-tRNA(Gly) + AMP + diphosphate. The chain is Glycine--tRNA ligase alpha subunit from Actinobacillus pleuropneumoniae serotype 5b (strain L20).